The chain runs to 156 residues: Putative pre-16S rRNA nuclease (156 aa).

It belongs to the YqgF nuclease family.

The protein localises to the cytoplasm. Its function is as follows. Could be a nuclease involved in processing of the 5'-end of pre-16S rRNA. The polypeptide is Putative pre-16S rRNA nuclease (Ehrlichia canis (strain Jake)).